Reading from the N-terminus, the 308-residue chain is uncharacterized protein (308 aa).

The ABC transporter domain occupies 5-236 (LELQQLKKTY…LKSETFILDL (232 aa)). ATP is bound at residue 38 to 45 (GPNGAGKS).

It belongs to the ABC transporter superfamily.

This is an uncharacterized protein from Escherichia coli (strain K12).